A 323-amino-acid chain; its full sequence is Ribosomal RNA small subunit methyltransferase H (323 aa).

Residues 39-41 (GGY), Asp57, Phe84, Asp103, and Gln110 contribute to the S-adenosyl-L-methionine site.

This sequence belongs to the methyltransferase superfamily. RsmH family.

The protein localises to the cytoplasm. It catalyses the reaction cytidine(1402) in 16S rRNA + S-adenosyl-L-methionine = N(4)-methylcytidine(1402) in 16S rRNA + S-adenosyl-L-homocysteine + H(+). Its function is as follows. Specifically methylates the N4 position of cytidine in position 1402 (C1402) of 16S rRNA. This is Ribosomal RNA small subunit methyltransferase H from Gluconobacter oxydans (strain 621H) (Gluconobacter suboxydans).